The sequence spans 310 residues: UDP-N-acetylenolpyruvoylglucosamine reductase (310 aa).

Residues 35–199 (VGGPAQALFT…TSARFRGTPA (165 aa)) enclose the FAD-binding PCMH-type domain. Arginine 179 is a catalytic residue. Catalysis depends on serine 228, which acts as the Proton donor. Glutamate 298 is an active-site residue.

The protein belongs to the MurB family. FAD serves as cofactor.

The protein localises to the cytoplasm. It carries out the reaction UDP-N-acetyl-alpha-D-muramate + NADP(+) = UDP-N-acetyl-3-O-(1-carboxyvinyl)-alpha-D-glucosamine + NADPH + H(+). Its pathway is cell wall biogenesis; peptidoglycan biosynthesis. Functionally, cell wall formation. The sequence is that of UDP-N-acetylenolpyruvoylglucosamine reductase from Rhodopseudomonas palustris (strain BisB5).